A 514-amino-acid chain; its full sequence is ATP synthase subunit alpha (514 aa).

170–177 (GDRQIGKT) serves as a coordination point for ATP.

This sequence belongs to the ATPase alpha/beta chains family. As to quaternary structure, F-type ATPases have 2 components, CF(1) - the catalytic core - and CF(0) - the membrane proton channel. CF(1) has five subunits: alpha(3), beta(3), gamma(1), delta(1), epsilon(1). CF(0) has three main subunits: a(1), b(2) and c(9-12). The alpha and beta chains form an alternating ring which encloses part of the gamma chain. CF(1) is attached to CF(0) by a central stalk formed by the gamma and epsilon chains, while a peripheral stalk is formed by the delta and b chains.

The protein resides in the cell inner membrane. It catalyses the reaction ATP + H2O + 4 H(+)(in) = ADP + phosphate + 5 H(+)(out). Functionally, produces ATP from ADP in the presence of a proton gradient across the membrane. The alpha chain is a regulatory subunit. This chain is ATP synthase subunit alpha, found in Pseudomonas aeruginosa (strain LESB58).